A 399-amino-acid polypeptide reads, in one-letter code: Dihydrolipoyllysine-residue succinyltransferase component of 2-oxoglutarate dehydrogenase complex (399 aa).

The 76-residue stretch at 2–77 (AIDIKAPTFP…LSGELLGKLT (76 aa)) folds into the Lipoyl-binding domain. Position 43 is an N6-lipoyllysine (Lys-43). A Peripheral subunit-binding (PSBD) domain is found at 104–141 (ILSPAARKIAEENAIAADSITGTGKGGRVTKEDAVAAA). Catalysis depends on residues His-370 and Asp-374.

The protein belongs to the 2-oxoacid dehydrogenase family. As to quaternary structure, forms a 24-polypeptide structural core with octahedral symmetry. Part of the 2-oxoglutarate dehydrogenase (OGDH) complex composed of E1 (2-oxoglutarate dehydrogenase), E2 (dihydrolipoamide succinyltransferase) and E3 (dihydrolipoamide dehydrogenase); the complex contains multiple copies of the three enzymatic components (E1, E2 and E3). (R)-lipoate is required as a cofactor.

The catalysed reaction is N(6)-[(R)-dihydrolipoyl]-L-lysyl-[protein] + succinyl-CoA = N(6)-[(R)-S(8)-succinyldihydrolipoyl]-L-lysyl-[protein] + CoA. Its pathway is amino-acid degradation; L-lysine degradation via saccharopine pathway; glutaryl-CoA from L-lysine: step 6/6. E2 component of the 2-oxoglutarate dehydrogenase (OGDH) complex which catalyzes the second step in the conversion of 2-oxoglutarate to succinyl-CoA and CO(2). The sequence is that of Dihydrolipoyllysine-residue succinyltransferase component of 2-oxoglutarate dehydrogenase complex (sucB) from Azotobacter vinelandii.